Consider the following 227-residue polypeptide: Cytochrome c oxidase subunit 2 (227 aa).

The Mitochondrial intermembrane segment spans residues 1–14 (MAYPFQLGLQDATS). The chain crosses the membrane as a helical span at residues 15-45 (PIMEELTNFHDHTLMIVFLISTLVLYIISLM). The Mitochondrial matrix segment spans residues 46–59 (LTTKLTHTSTMDAQ). A helical transmembrane segment spans residues 60–87 (EVETIWTILPAVILILIALPSLRILYMM). Residues 88 to 227 (DEINNPALTV…YFEDWSASMI (140 aa)) lie on the Mitochondrial intermembrane side of the membrane. Residues His161, Cys196, Glu198, Cys200, His204, and Met207 each coordinate Cu cation. Glu198 contributes to the Mg(2+) binding site. Residue Tyr218 is modified to Phosphotyrosine.

This sequence belongs to the cytochrome c oxidase subunit 2 family. In terms of assembly, component of the cytochrome c oxidase (complex IV, CIV), a multisubunit enzyme composed of 14 subunits. The complex is composed of a catalytic core of 3 subunits MT-CO1, MT-CO2 and MT-CO3, encoded in the mitochondrial DNA, and 11 supernumerary subunits COX4I, COX5A, COX5B, COX6A, COX6B, COX6C, COX7A, COX7B, COX7C, COX8 and NDUFA4, which are encoded in the nuclear genome. The complex exists as a monomer or a dimer and forms supercomplexes (SCs) in the inner mitochondrial membrane with NADH-ubiquinone oxidoreductase (complex I, CI) and ubiquinol-cytochrome c oxidoreductase (cytochrome b-c1 complex, complex III, CIII), resulting in different assemblies (supercomplex SCI(1)III(2)IV(1) and megacomplex MCI(2)III(2)IV(2)). Found in a complex with TMEM177, COA6, COX18, COX20, SCO1 and SCO2. Interacts with TMEM177 in a COX20-dependent manner. Interacts with COX20. Interacts with COX16. The cofactor is Cu cation.

It is found in the mitochondrion inner membrane. It catalyses the reaction 4 Fe(II)-[cytochrome c] + O2 + 8 H(+)(in) = 4 Fe(III)-[cytochrome c] + 2 H2O + 4 H(+)(out). Component of the cytochrome c oxidase, the last enzyme in the mitochondrial electron transport chain which drives oxidative phosphorylation. The respiratory chain contains 3 multisubunit complexes succinate dehydrogenase (complex II, CII), ubiquinol-cytochrome c oxidoreductase (cytochrome b-c1 complex, complex III, CIII) and cytochrome c oxidase (complex IV, CIV), that cooperate to transfer electrons derived from NADH and succinate to molecular oxygen, creating an electrochemical gradient over the inner membrane that drives transmembrane transport and the ATP synthase. Cytochrome c oxidase is the component of the respiratory chain that catalyzes the reduction of oxygen to water. Electrons originating from reduced cytochrome c in the intermembrane space (IMS) are transferred via the dinuclear copper A center (CU(A)) of subunit 2 and heme A of subunit 1 to the active site in subunit 1, a binuclear center (BNC) formed by heme A3 and copper B (CU(B)). The BNC reduces molecular oxygen to 2 water molecules using 4 electrons from cytochrome c in the IMS and 4 protons from the mitochondrial matrix. This is Cytochrome c oxidase subunit 2 (MT-CO2) from Hybomys univittatus (Peter's striped mouse).